Here is a 316-residue protein sequence, read N- to C-terminus: Ribosomal RNA small subunit methyltransferase H (316 aa).

Residues 35 to 37 (AGH), aspartate 55, phenylalanine 84, aspartate 105, and glutamine 112 contribute to the S-adenosyl-L-methionine site.

This sequence belongs to the methyltransferase superfamily. RsmH family.

The protein resides in the cytoplasm. It carries out the reaction cytidine(1402) in 16S rRNA + S-adenosyl-L-methionine = N(4)-methylcytidine(1402) in 16S rRNA + S-adenosyl-L-homocysteine + H(+). Specifically methylates the N4 position of cytidine in position 1402 (C1402) of 16S rRNA. This chain is Ribosomal RNA small subunit methyltransferase H, found in Streptococcus pneumoniae (strain ATCC 700669 / Spain 23F-1).